Reading from the N-terminus, the 24-residue chain is Pandinin-2 (24 aa).

Homooligomer. In terms of tissue distribution, expressed by the venom gland.

The protein resides in the secreted. It localises to the target cell membrane. Functionally, disrupts cell membranes through formation of pores. Has strong antimicrobial activity against Gram-positive bacteria B.subtilis, S.epidermidis, E.faecalis and S.aureus. Is less active against Gram-negative bacteria P.aeruginosa and E.coli. Also increases efficacy of antibiotics (ampicillin, chloramphenicol, streptomycin, kanamycin, novobiocin) when tested against E.coli, probably by facilitating their incorporation into the bacteria. Possesses antifungal activity against C.albicans and hemolytic activity against human, sheep and pig erythrocytes. The sequence is that of Pandinin-2 from Pandinus imperator (Emperor scorpion).